The following is a 431-amino-acid chain: Enolase (431 aa).

Residues 27 to 47 (LESGHSGRAAVPSGASTGSRE) form a disordered region. Gln163 contributes to the (2R)-2-phosphoglycerate binding site. The active-site Proton donor is Glu205. Asp242, Glu285, and Asp312 together coordinate Mg(2+). 4 residues coordinate (2R)-2-phosphoglycerate: Lys337, Arg366, Ser367, and Lys388. The Proton acceptor role is filled by Lys337.

Belongs to the enolase family. The cofactor is Mg(2+).

It is found in the cytoplasm. It localises to the secreted. Its subcellular location is the cell surface. It carries out the reaction (2R)-2-phosphoglycerate = phosphoenolpyruvate + H2O. The protein operates within carbohydrate degradation; glycolysis; pyruvate from D-glyceraldehyde 3-phosphate: step 4/5. Its function is as follows. Catalyzes the reversible conversion of 2-phosphoglycerate (2-PG) into phosphoenolpyruvate (PEP). It is essential for the degradation of carbohydrates via glycolysis. This Oleidesulfovibrio alaskensis (strain ATCC BAA-1058 / DSM 17464 / G20) (Desulfovibrio alaskensis) protein is Enolase.